A 132-amino-acid polypeptide reads, in one-letter code: Small ribosomal subunit protein uS8 (132 aa).

It belongs to the universal ribosomal protein uS8 family. In terms of assembly, part of the 30S ribosomal subunit. Contacts proteins S5 and S12.

Its function is as follows. One of the primary rRNA binding proteins, it binds directly to 16S rRNA central domain where it helps coordinate assembly of the platform of the 30S subunit. The protein is Small ribosomal subunit protein uS8 of Bartonella quintana (strain Toulouse) (Rochalimaea quintana).